The following is a 414-amino-acid chain: Imidazolonepropionase (414 aa).

A compositionally biased stretch (polar residues) spans 1–20; the sequence is MSHQLFRNTRIYSPMDSGQP. Positions 1–26 are disordered; the sequence is MSHQLFRNTRIYSPMDSGQPSAGKAQ. Residues H81 and H83 each coordinate Fe(3+). 2 residues coordinate Zn(2+): H81 and H83. R90, Y153, and H186 together coordinate 4-imidazolone-5-propanoate. Y153 provides a ligand contact to N-formimidoyl-L-glutamate. H251 lines the Fe(3+) pocket. Residue H251 coordinates Zn(2+). E254 contacts 4-imidazolone-5-propanoate. A Fe(3+)-binding site is contributed by D325. D325 contributes to the Zn(2+) binding site. N-formimidoyl-L-glutamate-binding residues include N327 and G329. S330 is a 4-imidazolone-5-propanoate binding site.

It belongs to the metallo-dependent hydrolases superfamily. HutI family. The cofactor is Zn(2+). Fe(3+) is required as a cofactor.

It is found in the cytoplasm. It catalyses the reaction 4-imidazolone-5-propanoate + H2O = N-formimidoyl-L-glutamate. Its pathway is amino-acid degradation; L-histidine degradation into L-glutamate; N-formimidoyl-L-glutamate from L-histidine: step 3/3. Catalyzes the hydrolytic cleavage of the carbon-nitrogen bond in imidazolone-5-propanoate to yield N-formimidoyl-L-glutamate. It is the third step in the universal histidine degradation pathway. This Desulfotalea psychrophila (strain LSv54 / DSM 12343) protein is Imidazolonepropionase.